The chain runs to 114 residues: T cell receptor alpha variable 10 (114 aa).

An N-terminal signal peptide occupies residues 1–21 (MKKHLTTFLVILWLYFYRGNG). Residues 23 to 114 (NQVEQSPQSL…DSASYICVVS (92 aa)) enclose the Ig-like domain. 2 N-linked (GlcNAc...) asparagine glycosylation sites follow: asparagine 39 and asparagine 45. A disulfide bond links cysteine 44 and cysteine 111.

As to quaternary structure, alpha-beta TR is a heterodimer composed of an alpha and beta chain; disulfide-linked. The alpha-beta TR is associated with the transmembrane signaling CD3 coreceptor proteins to form the TR-CD3 (TcR or TCR). The assembly of alpha-beta TR heterodimers with CD3 occurs in the endoplasmic reticulum where a single alpha-beta TR heterodimer associates with one CD3D-CD3E heterodimer, one CD3G-CD3E heterodimer and one CD247 homodimer forming a stable octameric structure. CD3D-CD3E and CD3G-CD3E heterodimers preferentially associate with TR alpha and TR beta chains, respectively. The association of the CD247 homodimer is the last step of TcR assembly in the endoplasmic reticulum and is required for transport to the cell surface.

It localises to the cell membrane. Functionally, v region of the variable domain of T cell receptor (TR) alpha chain that participates in the antigen recognition. Alpha-beta T cell receptors are antigen specific receptors which are essential to the immune response and are present on the cell surface of T lymphocytes. Recognize peptide-major histocompatibility (MH) (pMH) complexes that are displayed by antigen presenting cells (APC), a prerequisite for efficient T cell adaptive immunity against pathogens. Binding of alpha-beta TR to pMH complex initiates TR-CD3 clustering on the cell surface and intracellular activation of LCK that phosphorylates the ITAM motifs of CD3G, CD3D, CD3E and CD247 enabling the recruitment of ZAP70. In turn ZAP70 phosphorylates LAT, which recruits numerous signaling molecules to form the LAT signalosome. The LAT signalosome propagates signal branching to three major signaling pathways, the calcium, the mitogen-activated protein kinase (MAPK) kinase and the nuclear factor NF-kappa-B (NF-kB) pathways, leading to the mobilization of transcription factors that are critical for gene expression and essential for T cell growth and differentiation. The T cell repertoire is generated in the thymus, by V-(D)-J rearrangement. This repertoire is then shaped by intrathymic selection events to generate a peripheral T cell pool of self-MH restricted, non-autoaggressive T cells. Post-thymic interaction of alpha-beta TR with the pMH complexes shapes TR structural and functional avidity. This is T cell receptor alpha variable 10 from Homo sapiens (Human).